We begin with the raw amino-acid sequence, 369 residues long: Serine/threonine-protein kinase srb10 (369 aa).

Positions 5 to 319 constitute a Protein kinase domain; the sequence is YKIIGFISSG…AKQALEHVFF (315 aa). Residues 11–19 and K36 each bind ATP; that span reads ISSGTYGKV. D140 serves as the catalytic Proton acceptor.

The protein belongs to the protein kinase superfamily. CMGC Ser/Thr protein kinase family. CDC2/CDKX subfamily. In terms of assembly, component of the Cdk8 module of the Mediator complex. The Cdk8 module is composed of srb8, srb9, srb10 and srb11. Interacts with med17 and med18.

The protein resides in the nucleus. It catalyses the reaction L-seryl-[protein] + ATP = O-phospho-L-seryl-[protein] + ADP + H(+). The enzyme catalyses L-threonyl-[protein] + ATP = O-phospho-L-threonyl-[protein] + ADP + H(+). The catalysed reaction is [DNA-directed RNA polymerase] + ATP = phospho-[DNA-directed RNA polymerase] + ADP + H(+). Its function is as follows. Catalytic component of the Cdk8 module/Srb8-11 module which is a regulatory module of the Mediator complex that regulates basal RNA polymerase II transcription. The Cdk8 module may sterically hinder the interaction between Mediator and RNA polymerase II leading to transcriptional repression of a subset of genes regulated by Mediator. This Schizosaccharomyces pombe (strain 972 / ATCC 24843) (Fission yeast) protein is Serine/threonine-protein kinase srb10 (srb10).